Consider the following 373-residue polypeptide: Chorismate synthase (373 aa).

Arg46 contributes to the NADP(+) binding site. FMN-binding positions include 123 to 125, 251 to 252, Gly295, 310 to 314, and Arg337; these read RSS, NA, and KPTPS.

Belongs to the chorismate synthase family. The cofactor is FMNH2.

The catalysed reaction is 5-O-(1-carboxyvinyl)-3-phosphoshikimate = chorismate + phosphate. It participates in metabolic intermediate biosynthesis; chorismate biosynthesis; chorismate from D-erythrose 4-phosphate and phosphoenolpyruvate: step 7/7. Its function is as follows. Catalyzes the anti-1,4-elimination of the C-3 phosphate and the C-6 proR hydrogen from 5-enolpyruvylshikimate-3-phosphate (EPSP) to yield chorismate, which is the branch point compound that serves as the starting substrate for the three terminal pathways of aromatic amino acid biosynthesis. This reaction introduces a second double bond into the aromatic ring system. The polypeptide is Chorismate synthase (Methanococcus maripaludis (strain DSM 14266 / JCM 13030 / NBRC 101832 / S2 / LL)).